The chain runs to 454 residues: Bifunctional protein GlmU (454 aa).

Residues 1-228 (MNKCAIILAA…FEETLGVNSR (228 aa)) form a pyrophosphorylase region. UDP-N-acetyl-alpha-D-glucosamine is bound by residues 8 to 11 (LAAG), Lys-22, Gln-73, and 78 to 79 (GT). Residue Asp-103 participates in Mg(2+) binding. UDP-N-acetyl-alpha-D-glucosamine is bound by residues Gly-140, Glu-154, Asn-169, and Asn-226. Asn-226 is a binding site for Mg(2+). A linker region spans residues 229–249 (AELAKVESIMRNRINRTHLDN). The N-acetyltransferase stretch occupies residues 250–454 (GVTIIDPLNT…EGWVERKKLK (205 aa)). The UDP-N-acetyl-alpha-D-glucosamine site is built by Arg-331 and Lys-349. Residue His-361 is the Proton acceptor of the active site. UDP-N-acetyl-alpha-D-glucosamine contacts are provided by Tyr-364 and Asn-375. Acetyl-CoA is bound by residues 384-385 (NY), Ala-421, and Arg-438.

This sequence in the N-terminal section; belongs to the N-acetylglucosamine-1-phosphate uridyltransferase family. The protein in the C-terminal section; belongs to the transferase hexapeptide repeat family. Homotrimer. Requires Mg(2+) as cofactor.

It is found in the cytoplasm. The enzyme catalyses alpha-D-glucosamine 1-phosphate + acetyl-CoA = N-acetyl-alpha-D-glucosamine 1-phosphate + CoA + H(+). It catalyses the reaction N-acetyl-alpha-D-glucosamine 1-phosphate + UTP + H(+) = UDP-N-acetyl-alpha-D-glucosamine + diphosphate. It functions in the pathway nucleotide-sugar biosynthesis; UDP-N-acetyl-alpha-D-glucosamine biosynthesis; N-acetyl-alpha-D-glucosamine 1-phosphate from alpha-D-glucosamine 6-phosphate (route II): step 2/2. The protein operates within nucleotide-sugar biosynthesis; UDP-N-acetyl-alpha-D-glucosamine biosynthesis; UDP-N-acetyl-alpha-D-glucosamine from N-acetyl-alpha-D-glucosamine 1-phosphate: step 1/1. It participates in bacterial outer membrane biogenesis; LPS lipid A biosynthesis. In terms of biological role, catalyzes the last two sequential reactions in the de novo biosynthetic pathway for UDP-N-acetylglucosamine (UDP-GlcNAc). The C-terminal domain catalyzes the transfer of acetyl group from acetyl coenzyme A to glucosamine-1-phosphate (GlcN-1-P) to produce N-acetylglucosamine-1-phosphate (GlcNAc-1-P), which is converted into UDP-GlcNAc by the transfer of uridine 5-monophosphate (from uridine 5-triphosphate), a reaction catalyzed by the N-terminal domain. The protein is Bifunctional protein GlmU of Clostridium perfringens (strain SM101 / Type A).